The primary structure comprises 217 residues: ATP-dependent Clp protease proteolytic subunit (217 aa).

Catalysis depends on Ser121, which acts as the Nucleophile. His146 is a catalytic residue.

The protein belongs to the peptidase S14 family. In terms of assembly, fourteen ClpP subunits assemble into 2 heptameric rings which stack back to back to give a disk-like structure with a central cavity, resembling the structure of eukaryotic proteasomes.

The protein localises to the cytoplasm. The enzyme catalyses Hydrolysis of proteins to small peptides in the presence of ATP and magnesium. alpha-casein is the usual test substrate. In the absence of ATP, only oligopeptides shorter than five residues are hydrolyzed (such as succinyl-Leu-Tyr-|-NHMec, and Leu-Tyr-Leu-|-Tyr-Trp, in which cleavage of the -Tyr-|-Leu- and -Tyr-|-Trp bonds also occurs).. Its function is as follows. Cleaves peptides in various proteins in a process that requires ATP hydrolysis. Has a chymotrypsin-like activity. Plays a major role in the degradation of misfolded proteins. The protein is ATP-dependent Clp protease proteolytic subunit of Burkholderia mallei (strain NCTC 10247).